The sequence spans 637 residues: 1-deoxy-D-xylulose-5-phosphate synthase (637 aa).

Thiamine diphosphate contacts are provided by residues histidine 71 and 112 to 114 (SHA). Aspartate 144 is a binding site for Mg(2+). Thiamine diphosphate is bound by residues 145–146 (GA), asparagine 173, tyrosine 284, and glutamate 365. Asparagine 173 is a binding site for Mg(2+).

It belongs to the transketolase family. DXPS subfamily. In terms of assembly, homodimer. The cofactor is Mg(2+). Requires thiamine diphosphate as cofactor.

The enzyme catalyses D-glyceraldehyde 3-phosphate + pyruvate + H(+) = 1-deoxy-D-xylulose 5-phosphate + CO2. Its pathway is metabolic intermediate biosynthesis; 1-deoxy-D-xylulose 5-phosphate biosynthesis; 1-deoxy-D-xylulose 5-phosphate from D-glyceraldehyde 3-phosphate and pyruvate: step 1/1. Its function is as follows. Catalyzes the acyloin condensation reaction between C atoms 2 and 3 of pyruvate and glyceraldehyde 3-phosphate to yield 1-deoxy-D-xylulose-5-phosphate (DXP). The sequence is that of 1-deoxy-D-xylulose-5-phosphate synthase from Mycobacterium ulcerans (strain Agy99).